The chain runs to 354 residues: UDP-2,3-diacetamido-2,3-dideoxy-D-glucuronate 2-epimerase (354 aa).

It belongs to the UDP-N-acetylglucosamine 2-epimerase family.

The catalysed reaction is UDP-2,3-diacetamido-2,3-dideoxy-alpha-D-glucuronate = UDP-2,3-diacetamido-2,3-dideoxy-alpha-D-mannuronate. Its pathway is bacterial outer membrane biogenesis; LPS O-antigen biosynthesis. Functionally, plays a role in the biosynthesis of B-band O antigen for serotype O5. Catalyzes the epimerization of UDP-2,3-diacetamido-2,3-dideoxy-alpha-D-glucuronic acid (UDP-alpha-D-GlcNAc3NAcA) to UDP-2,3-diacetamido-2,3-dideoxy-alpha-D-mannuronic acid (UDP-alpha-D-ManNAc3NAcA). Exhibits high specificity towards the substrate as UDP-alpha-D-GlcNAc, UDP-alpha-D-GlcNAcA (UDP-2-acetamido-2-deoxy-alpha-D-glucuronic acid) and UDP-alpha-D-GlcNAc3NAc (UDP-2,3-diacetamido-2,3-dideoxy-alpha-D-glucose) cannot act as substrates. The protein is UDP-2,3-diacetamido-2,3-dideoxy-D-glucuronate 2-epimerase of Pseudomonas aeruginosa (strain ATCC 15692 / DSM 22644 / CIP 104116 / JCM 14847 / LMG 12228 / 1C / PRS 101 / PAO1).